The following is a 438-amino-acid chain: Cytochrome P450 monooxygenase claJ (438 aa).

Heme is bound at residue C378.

Belongs to the cytochrome P450 family. Heme serves as cofactor.

Its pathway is secondary metabolite biosynthesis. Its function is as follows. Cytochrome P450 monooxygenase; part of the cla gene cluster that produces clavatol and ortho-quinone methide. The clavatol biosynthesis cluster cla and the terrestric acid cluster tra are both involved in the production of peniphenones and penilactones. The non-reducing PKS claF is responsible for the formation of clavatol from successive condensations of 3 malonyl-CoA units, presumably with a simple acetyl-CoA starter unit, and 2 methylation steps. The esterase claE probably collaborates with claF by catalyzing the hydrolysis of ACP-bound acyl intermediates to free the ACP from stalled intermediates. The clavatol oxidase claD then converts clavatol to hydroxyclavatol. Spontaneous dehydration of hydroxyclavatol leads to the accumulation of the highly active ortho-quinone methide. On the other hand, the PKS-NRPS hybrid traA is involved in the formation of crustosic acid, with the help of traB and traD. The polyketide synthase module (PKS) of traA is responsible for the synthesis of the polyketide backbone via the condensation of an acetyl-CoA starter unit with 3 malonyl-CoA units. The downstream nonribosomal peptide synthetase (NRPS) module then amidates the carboxyl end of the polyketide with L-malic acid. Because traA lacks a designated enoylreductase (ER) domain, the required activity is provided the enoyl reductase traG. Crustosic acid undergoes decarboxylation and isomerization to the terrestric acid, catalyzed by the 2-oxoglutarate-dependent dioxygenase traH. Both acids are further converted to the 2 gamma-butyrolactones (R)-5-methyltetronic acid and (S)-5-carboxylmethyltetronic acid, with involvement of the cytochrome P450 monooxygenase claJ. Spontaneous addition of the methide to these gamma-butyrolactones leads to peniphenone D and penilactone D, which undergo again stereospecific attacking by methide to give penilactones A and B. The polypeptide is Cytochrome P450 monooxygenase claJ (Penicillium crustosum (Blue mold fungus)).